The primary structure comprises 161 residues: Troponin C, slow skeletal and cardiac muscles (161 aa).

Position 1 is an N-acetylmethionine (Met-1). 4 EF-hand domains span residues 16 to 51 (QKNE…LGQN), 52 to 87 (PTPE…CMKD), 92 to 127 (KSEE…TGET), and 128 to 161 (ITED…KGVE). Residues Asp-65, Asp-67, Ser-69, Thr-71, and Glu-76 each coordinate Ca(2+). Residue Ser-98 is modified to Phosphoserine. Positions 105, 107, 109, 111, 116, 141, 143, 145, 147, and 152 each coordinate Ca(2+).

Belongs to the troponin C family.

In terms of biological role, troponin is the central regulatory protein of striated muscle contraction. Tn consists of three components: Tn-I which is the inhibitor of actomyosin ATPase, Tn-T which contains the binding site for tropomyosin and Tn-C. The binding of calcium to Tn-C abolishes the inhibitory action of Tn on actin filaments. The chain is Troponin C, slow skeletal and cardiac muscles (Tnnc1) from Mus musculus (Mouse).